Here is a 212-residue protein sequence, read N- to C-terminus: Thymidylate kinase (212 aa).

15-22 lines the ATP pocket; the sequence is GIDGAGKS.

Belongs to the thymidylate kinase family.

The catalysed reaction is dTMP + ATP = dTDP + ADP. Phosphorylation of dTMP to form dTDP in both de novo and salvage pathways of dTTP synthesis. This chain is Thymidylate kinase, found in Chromobacterium violaceum (strain ATCC 12472 / DSM 30191 / JCM 1249 / CCUG 213 / NBRC 12614 / NCIMB 9131 / NCTC 9757 / MK).